Consider the following 284-residue polypeptide: MNSGNLFFGWADESSQNKGRYRAIGMVSHPAEFESKLEGDINNILDYVFDESGLKRRELKWNKIDIFRCRAYERIVDYFLEHTGLGNPPFRVDILRWDIEDSRHSIQGRDDNQNLQRMYYHLFSNVISKRWPSGDWCFFPDKTGSVDWGELASFLDLGGSKVDLNERFNIRSINEVDSKDNVLVQVADFFAGLSVFSKEKLGLYVDWKFEKRGQQRLVPVEKIDLSKKDRRRFKILSYFEEGCEKLKIGVVLDRSKGLWTPNPANSINFWHYEPQSDADKAPTR.

This is an uncharacterized protein from Methanothermobacter thermautotrophicus (Methanobacterium thermoformicicum).